Consider the following 51-residue polypeptide: Large ribosomal subunit protein eL39 (51 aa).

The protein belongs to the eukaryotic ribosomal protein eL39 family. In terms of assembly, part of the 50S ribosomal subunit.

The sequence is that of Large ribosomal subunit protein eL39 from Pyrococcus furiosus (strain ATCC 43587 / DSM 3638 / JCM 8422 / Vc1).